The sequence spans 316 residues: Polyprenyl transferase ausN (316 aa).

A run of 9 helical transmembrane segments spans residues 45-65 (VVGV…TFLL), 69-89 (VILS…NDLI), 108-128 (GAVS…CGGS), 129-149 (LLLL…FFAL), 163-183 (LILT…DMNP), 188-208 (IPTL…DIVY), 233-253 (DQIA…GGIL), 256-276 (LGIP…LRFL), and 296-316 (SCLL…CVRL).

This sequence belongs to the UbiA prenyltransferase family. Mg(2+) is required as a cofactor.

It is found in the membrane. It carries out the reaction 3,5-dimethylorsellinate + (2E,6E)-farnesyl diphosphate = (3R)-3-farnesyl-6-hydroxy-2,3,5-trimethyl-4-oxocyclohexa-1,5-diene-1-carboxylate + diphosphate + H(+). It participates in secondary metabolite biosynthesis; terpenoid biosynthesis. Its function is as follows. Polyprenyl transferase; part of the gene cluster A that mediates the biosynthesis of the fungal meroterpenoid acetoxydehydroaustin. The first step of the pathway is the synthesis of 3,5-dimethylorsellinic acid by the polyketide synthase ausA. 3,5-dimethylorsellinic acid is then prenylated by the polyprenyl transferase ausN. Further epoxidation by the FAD-dependent monooxygenase ausM and cyclization by the probable terpene cyclase ausL lead to the formation of protoaustinoid A. Protoaustinoid A is then oxidized to spiro-lactone preaustinoid A3 by the combined action of the FAD-binding monooxygenases ausB and ausC, and the dioxygenase ausE. Acid-catalyzed keto-rearrangement and ring contraction of the tetraketide portion of preaustinoid A3 by ausJ lead to the formation of preaustinoid A4. The aldo-keto reductase ausK, with the help of ausH, is involved in the next step by transforming preaustinoid A4 into isoaustinone which is in turn hydroxylated by the P450 monooxygenase ausI to form austinolide. The cytochrome P450 monooxygenase ausG then modifies austinolide to austinol. Austinol is further acetylated to austin by the O-acetyltransferase ausP, which spontaneously changes to dehydroaustin. The cytochrome P450 monooxygenase then converts dehydroaustin is into 7-dehydrodehydroaustin. The hydroxylation catalyzed by ausR permits the second O-acetyltransferase ausQ to add an additional acetyl group to the molecule, leading to the formation of acetoxydehydroaustin. Due to genetic rearrangements of the clusters and the subsequent loss of some enzymes, the end product of the Penicillium brasilianum austinoid biosynthesis clusters is acetoxydehydroaustin. The chain is Polyprenyl transferase ausN from Penicillium brasilianum.